The chain runs to 321 residues: Chemotaxis protein CheV1 (321 aa).

One can recognise a CheW-like domain in the interval 19 to 177; sequence ELQLLCFRLG…IEKMLIDVFP (159 aa). The region spanning 198-319 is the Response regulatory domain; that stretch reads CVLLADDSPS…IQRVVKQFLE (122 aa). Residue D252 is modified to 4-aspartylphosphate.

Plays an essential role in chemotaxis signal transduction system in order to colonize the host stomach. May act as a phosphate sink to control the flow of phosphate to CheAY. The polypeptide is Chemotaxis protein CheV1 (Helicobacter pylori (strain ATCC 700392 / 26695) (Campylobacter pylori)).